A 486-amino-acid polypeptide reads, in one-letter code: MITTEIKRVKNHINGEWVESTGTEVEAVPNPATGKIIAYVPLSPKEDVEKAVEAAKAAYETWSKVPVPNRSRQLYKYLQLLQENKEELAKIITLENGKTLTDATGEVQRGIEAVELATSAPNLMMGQALPNIASGIDGSIWRYPIGVVAGITPFNFPMMIPLWMFPLAIACGNTFVLKTSERTPLLAERLVELFYEAGFPKGVLNLVQGGKDVVNSILENKDIQAVSFVGSEPVARYVYETGTKHGKRVQALAGAKNHAIVMPDCNLEKTVQGVIGSAFASSGERCMACSVVAVVDEIADEFIDVLVAETKKLKVGDGFHEDNYVGPLIRESHKERVLGYINSGVADGATLLVDGRKIKEEVGEGYFVGATIFDGVNQEMKIWQDEIFAPVLSIVRVKDLEEGIKLTNQSKFANGAVIYTSNGKHAQTFRDNIDAGMIGVNVNVPAPMAFFAFAGNKASFFGDLGTNGTDGVQFYTRKKVVTERWF.

Positions 154, 178, 181, 182, and 231 each coordinate NAD(+). Catalysis depends on Cys286, which acts as the Nucleophile. Residue Glu386 coordinates NAD(+).

The protein belongs to the aldehyde dehydrogenase family. IolA subfamily. As to quaternary structure, homotetramer.

It catalyses the reaction 3-oxopropanoate + NAD(+) + CoA + H2O = hydrogencarbonate + acetyl-CoA + NADH + H(+). The catalysed reaction is 2-methyl-3-oxopropanoate + NAD(+) + CoA + H2O = propanoyl-CoA + hydrogencarbonate + NADH + H(+). It participates in polyol metabolism; myo-inositol degradation into acetyl-CoA; acetyl-CoA from myo-inositol: step 7/7. In terms of biological role, catalyzes the oxidation of malonate semialdehyde (MSA) and methylmalonate semialdehyde (MMSA) into acetyl-CoA and propanoyl-CoA, respectively. Is involved in a myo-inositol catabolic pathway. Bicarbonate, and not CO2, is the end-product of the enzymatic reaction. This is Malonate-semialdehyde dehydrogenase 1 from Bacillus anthracis.